We begin with the raw amino-acid sequence, 1441 residues long: Remodeling and spacing factor 1 (1441 aa).

In terms of domain architecture, DDT spans 17–84; sequence PGSCPNFAVV…MRKIGKSVTA (68 aa). Glycyl lysine isopeptide (Lys-Gly) (interchain with G-Cter in SUMO2) cross-links involve residues K136 and K215. Over residues 215 to 227 the composition is skewed to polar residues; it reads KNSSQQDNSSRES. The tract at residues 215–283 is disordered; sequence KNSSQQDNSS…TTVKKEKEDE (69 aa). S227 carries the post-translational modification Phosphoserine. 2 stretches are compositionally biased toward basic and acidic residues: residues 234–257 and 274–283; these read ETKK…KSEE and TTVKKEKEDE. Residues K236, K243, K248, K252, and K254 each participate in a glycyl lysine isopeptide (Lys-Gly) (interchain with G-Cter in SUMO2) cross-link. A Glycyl lysine isopeptide (Lys-Gly) (interchain with G-Cter in SUMO1); alternate cross-link involves residue K277. K277 participates in a covalent cross-link: Glycyl lysine isopeptide (Lys-Gly) (interchain with G-Cter in SUMO2); alternate. Residues K284, K288, K294, K305, K306, K309, K323, K327, K337, K342, K358, K373, K381, and K390 each participate in a glycyl lysine isopeptide (Lys-Gly) (interchain with G-Cter in SUMO2) cross-link. The span at 330–340 shows a compositional bias: basic and acidic residues; that stretch reads RADPKDTKSSM. The segment at 330–385 is disordered; the sequence is RADPKDTKSSMEKPVAQEPERIEFGGNIKSSHEITEKSTEETEKLKNDQQAKIPLK. A compositionally biased stretch (basic and acidic residues) spans 359–378; the sequence is SSHEITEKSTEETEKLKNDQ. Phosphoserine occurs at positions 392 and 397. Residues K400, K405, K415, and K419 each participate in a glycyl lysine isopeptide (Lys-Gly) (interchain with G-Cter in SUMO2) cross-link. S429 is subject to Phosphoserine. K439 is covalently cross-linked (Glycyl lysine isopeptide (Lys-Gly) (interchain with G-Cter in SUMO2)). K456 is covalently cross-linked (Glycyl lysine isopeptide (Lys-Gly) (interchain with G-Cter in SUMO1); alternate). K456 participates in a covalent cross-link: Glycyl lysine isopeptide (Lys-Gly) (interchain with G-Cter in SUMO2); alternate. Residues K463 and K468 each participate in a glycyl lysine isopeptide (Lys-Gly) (interchain with G-Cter in SUMO2) cross-link. Basic and acidic residues predominate over residues 467–480; the sequence is TKEESYSPSKDRNI. The segment at 467 to 634 is disordered; that stretch reads TKEESYSPSK…AAETSPPSNI (168 aa). A Phosphoserine modification is found at S473. Residues 482-498 show a composition bias toward polar residues; sequence TEGNGTESLNSVITSMK. A Glycyl lysine isopeptide (Lys-Gly) (interchain with G-Cter in SUMO2) cross-link involves residue K498. Residues 500 to 514 show a composition bias toward basic and acidic residues; the sequence is GELEKETAPLRKDAD. The residue at position 524 (S524) is a Phosphoserine. The span at 552–562 shows a compositional bias: polar residues; the sequence is SKTALSSTESC. A Glycyl lysine isopeptide (Lys-Gly) (interchain with G-Cter in SUMO2) cross-link involves residue K565. Residues 565–601 are compositionally biased toward basic and acidic residues; that stretch reads KGEEKSPKTKKDKRPPILECLEKLEKSKKTFLDKDAQ. Phosphoserine occurs at positions 570 and 604. Residues 609–621 are compositionally biased toward basic and acidic residues; it reads EVPKSTLESEKPG. The residue at position 622 (S622) is a Phosphoserine. Position 628 is a phosphothreonine (T628). S629 is subject to Phosphoserine. Residues K662, K663, K670, K677, K698, and K709 each participate in a glycyl lysine isopeptide (Lys-Gly) (interchain with G-Cter in SUMO2) cross-link. The interval 675–887 is disordered; it reads FTKVEMDNLD…EEKESEEAIL (213 aa). S748 is modified (phosphoserine). Basic and acidic residues-rich tracts occupy residues 753–770, 789–802, and 816–831; these read LEPE…EKTN, AEIR…KRGE, and KTDK…KDTN. Residues K758, K768, K795, and K799 each participate in a glycyl lysine isopeptide (Lys-Gly) (interchain with G-Cter in SUMO2) cross-link. Low complexity predominate over residues 864-873; the sequence is GSGSEKSSAA. The span at 874–887 shows a compositional bias: acidic residues; it reads SEEEEEKESEEAIL. S882 is modified (phosphoserine). A PHD-type zinc finger spans residues 891-941; sequence DEPCKKCGLPNHPELILLCDSCDSGYHTACLRPPLMIIPDGEWFCPPCQHK. Positions 942 to 1012 form a coiled coil; the sequence is LLCEKLEEQL…SKANLLERRS (71 aa). A disordered region spans residues 983–1007; the sequence is PPQEPDFSEDQEEKKKDSKKSKANL. K1039 is covalently cross-linked (Glycyl lysine isopeptide (Lys-Gly) (interchain with G-Cter in SUMO2)). K1050 is modified (N6-acetyllysine). The disordered stretch occupies residues 1063–1428; it reads ISTILDEERK…EEEEDELLRV (366 aa). Composition is skewed to acidic residues over residues 1094-1107 and 1120-1141; these read LDSD…ESED and VVSD…DSDT. Phosphoserine occurs at positions 1096, 1098, and 1105. The segment covering 1146–1169 has biased composition (basic residues); the sequence is RRLRRHPSRPMRQSRRLRRKTPKK. The segment covering 1189–1199 has biased composition (acidic residues); sequence SDFSDDFSDDF. Residues 1203-1212 are compositionally biased toward basic residues; it reads RRRRSRRNQK. Phosphoserine occurs at positions 1221, 1223, and 1226. The segment covering 1229 to 1244 has biased composition (basic residues); it reads SLRRGKEIRRVHKRRL. S1258 and S1277 each carry phosphoserine. T1278 carries the phosphothreonine modification. Acidic residues predominate over residues 1280–1292; that stretch reads EYSEADEEEEEEE. T1305 is subject to Phosphothreonine. A phosphoserine mark is found at S1325 and S1336. Basic and acidic residues predominate over residues 1335–1344; it reads ESTKKPYRIE. N6-acetyllysine is present on K1339. 3 positions are modified to phosphoserine: S1345, S1359, and S1375. Residues 1394 to 1408 are compositionally biased toward polar residues; that stretch reads PKDNSTASASLASNG.

In terms of assembly, component of the RSF-1 ISWI chromatin-remodeling complex at least composed of SMARCA1 and RSF1. Within the RSF-1 ISWI chromatin-remodeling complex interacts with SMARCA1. Component of the RSF-5 ISWI chromatin-remodeling complex (also called the RSF complex) at least composed of SMARCA5/SNF2H and RSF1. Within the RSF-5 ISWI chromatin-remodeling complex interacts with SMARCA5/SNF2H; the interaction is direct. Identified in a centromere complex containing histones H2A, H2B and H4, and at least CENPA, CENPB, CENPC, CENPT, CENPN, HJURP, SUPT16H, SSRP1 and RSF1. Also binds the HBV pX/HBx protein, which is required to activate transcription of the viral genome. Phosphorylated. Ubiquitously expressed. Highly expressed in the heart, skeletal muscle, kidney and placenta. Expressed at low levels in the brain and colon.

The protein localises to the nucleus. Regulatory subunit of the ATP-dependent RSF-1 and RSF-5 ISWI chromatin-remodeling complexes, which form ordered nucleosome arrays on chromatin and facilitate access to DNA during DNA-templated processes such as DNA replication, transcription, and repair. Binds to core histones together with SMARCA5, and is required for the assembly of regular nucleosome arrays by the RSF-5 ISWI chromatin-remodeling complex. Directly stimulates the ATPase activity of SMARCA1 and SMARCA5 in the RSF-1 and RSF-5 ISWI chromatin-remodeling complexes, respectively. The RSF-1 ISWI chromatin remodeling complex has a lower ATP hydrolysis rate than the RSF-5 ISWI chromatin-remodeling complex. The complexes do not have the ability to slide mononucleosomes to the center of a DNA template. Facilitates transcription of hepatitis B virus (HBV) genes by the pX transcription activator. In case of infection by HBV, together with pX, it represses TNF-alpha induced NF-kappa-B transcription activation. Represses transcription when artificially recruited to chromatin by fusion to a heterogeneous DNA binding domain. The polypeptide is Remodeling and spacing factor 1 (RSF1) (Homo sapiens (Human)).